The sequence spans 129 residues: Small ribosomal subunit protein uS11 (129 aa).

Belongs to the universal ribosomal protein uS11 family. Part of the 30S ribosomal subunit. Interacts with proteins S7 and S18. Binds to IF-3.

In terms of biological role, located on the platform of the 30S subunit, it bridges several disparate RNA helices of the 16S rRNA. Forms part of the Shine-Dalgarno cleft in the 70S ribosome. The sequence is that of Small ribosomal subunit protein uS11 from Parvibaculum lavamentivorans (strain DS-1 / DSM 13023 / NCIMB 13966).